Consider the following 292-residue polypeptide: tRNA pseudouridine synthase B (292 aa).

D38 (nucleophile) is an active-site residue.

It belongs to the pseudouridine synthase TruB family. Type 1 subfamily.

The enzyme catalyses uridine(55) in tRNA = pseudouridine(55) in tRNA. Functionally, responsible for synthesis of pseudouridine from uracil-55 in the psi GC loop of transfer RNAs. This is tRNA pseudouridine synthase B from Streptococcus pneumoniae serotype 4 (strain ATCC BAA-334 / TIGR4).